Here is a 305-residue protein sequence, read N- to C-terminus: UDP-3-O-acyl-N-acetylglucosamine deacetylase (305 aa).

The Zn(2+) site is built by H79, H238, and D242. The active-site Proton donor is the H265.

Belongs to the LpxC family. Requires Zn(2+) as cofactor.

The enzyme catalyses a UDP-3-O-[(3R)-3-hydroxyacyl]-N-acetyl-alpha-D-glucosamine + H2O = a UDP-3-O-[(3R)-3-hydroxyacyl]-alpha-D-glucosamine + acetate. It functions in the pathway glycolipid biosynthesis; lipid IV(A) biosynthesis; lipid IV(A) from (3R)-3-hydroxytetradecanoyl-[acyl-carrier-protein] and UDP-N-acetyl-alpha-D-glucosamine: step 2/6. Its function is as follows. Catalyzes the hydrolysis of UDP-3-O-myristoyl-N-acetylglucosamine to form UDP-3-O-myristoylglucosamine and acetate, the committed step in lipid A biosynthesis. The chain is UDP-3-O-acyl-N-acetylglucosamine deacetylase from Haemophilus influenzae (strain PittGG).